The primary structure comprises 65 residues: Large ribosomal subunit protein uL30 (65 aa).

Belongs to the universal ribosomal protein uL30 family. As to quaternary structure, part of the 50S ribosomal subunit.

This Chloroflexus aurantiacus (strain ATCC 29366 / DSM 635 / J-10-fl) protein is Large ribosomal subunit protein uL30.